The chain runs to 292 residues: Small ribosomal subunit protein uS2 (292 aa).

The disordered stretch occupies residues arginine 230–alanine 292. 2 stretches are compositionally biased toward basic and acidic residues: residues glutamate 247–alanine 259 and proline 271–alanine 292.

This sequence belongs to the universal ribosomal protein uS2 family.

The chain is Small ribosomal subunit protein uS2 from Thermobifida fusca (strain YX).